The sequence spans 2590 residues: 5-methylorsellinic acid synthase (2590 aa).

An N-terminal acylcarrier protein transacylase domain (SAT) region spans residues 6–255 (LLCGSQAIQW…HNQVNRELFA (250 aa)). Positions 369 to 784 (GDSIAIVGMG…GSNAALIVTQ (416 aa)) constitute a Ketosynthase family 3 (KS3) domain. Residues C534, H669, and H707 each act as for beta-ketoacyl synthase activity in the active site. The tract at residues 891-1191 (LAFGGQTGNV…HAVNLGGPEP (301 aa)) is malonyl-CoA:ACP transacylase (MAT) domain. The For acyl/malonyl transferase activity role is filled by S978. The segment at 1263-1393 (PKLVSFVKYL…GTVNISSLTS (131 aa)) is N-terminal hotdog fold. The PKS/mFAS DH domain occupies 1263–1569 (PKLVSFVKYL…FAKVPTASLK (307 aa)). A product template (PT) domain region spans residues 1267-1568 (SFVKYLDSNR…RFAKVPTASL (302 aa)). H1297 (proton acceptor; for dehydratase activity) is an active-site residue. Residues 1421-1569 (TSAIQGSLVY…FAKVPTASLK (149 aa)) are C-terminal hotdog fold. D1481 functions as the Proton donor; for dehydratase activity in the catalytic mechanism. The disordered stretch occupies residues 1587–1612 (LKVTEPSANVPKAQPVSTYPKPMKPA). Carrier domains lie at 1617-1691 (AQIR…ASGT) and 1736-1812 (SAQA…IPKP). Residues S1651 and S1772 each carry the O-(pantetheine 4'-phosphoryl)serine modification. A methyltransferase (CMeT) domain region spans residues 1980-2212 (QHRGEHKLLN…GFRHVDWSDD (233 aa)). Residues 2282–2590 (LMIHGGGHIM…EGYEFLLRHL (309 aa)) are thioesterase (TE) domain.

It catalyses the reaction 3 malonyl-CoA + acetyl-CoA + S-adenosyl-L-methionine + H(+) = 5-methylorsellinate + S-adenosyl-L-homocysteine + 3 CO2 + 4 CoA. Its pathway is secondary metabolite biosynthesis. Non-reducing polyketide synthase; part of the cluster A that mediates the biosynthesis of azasperpyranones, members of the azaphilone family that exhibit anti-cancer activities. Azasperpyranones are synthesized by 2 clusters, A and B. Cluster A is responsible for the production of the polyhydric phenol moiety while the azaphilonoid scaffold is produced by the cluster B. The non-reducing polyketide synthase ATEG_03629 produces 5-methyl orsellinic acid, which is then reduced to 5-methyl orsellinic aldehyde by the NRPS-like protein ATEG_03630. 5-methyl orsellinic aldehyde is then first hydroxylated by the FAD-dependent monooxygenase ATEG_03635 and subsequently hydroxylated by the cytochrome P450 monooxygenase ATEG_03631 to produce the unstable polyhydric phenol precursor of azasperpyranones. On the other hand, the polyketide synthase ATEG_07659 is responsible for producing the 3,5-dimethyloctadienone moiety from acetyl-CoA, three malonyl-CoA, and two S-adenosyl methionines (SAM). The 3,5-dimethyloctadienone moiety is then loaded onto the SAT domain of ATEG_07661 and extended with four malonyl-CoA and one SAM, which leads to the formation of 2,4-dihydroxy-6-(5,7-dimethyl-2-oxo-trans-3-trans-5-nonadienyl)-3-methylbenzaldehyde (compound 8) after reductive release and aldol condensation. The FAD-dependent monooxygenase ATEG_07662 is the next enzyme in the biosynthesis sequence and hydroxylates the side chain at the benzylic position of compound 8. In Aspergillus nidulans, afoF, the ortholog of the FAD-dependent oxygenase ATEG_07660, is the key enzyme for the biosynthesis of asperfuranone by catalyzing the hydroxylation at C-8 of to prevent the formation of a six-membered ring hemiacetal intermediate and thus facilitating the formation of a five-membered ring to produce asperfuranone. In Aspergillus terreus, ATEG_07660 is probably not functional, which leads to the formation of the six-membered ring hemiacetal intermediate presperpyranone instead of asperfuranone. Finally, ATEG_03636 is involved in the condensation of the polyhydric phenol moiety produced by cluster A and the perasperpyranone precursor produced by cluster B, to yield azasperpyranone A. Further modifications of azasperpyranone A result in the production of derivatives, including azasperpyranone B to F. The sequence is that of 5-methylorsellinic acid synthase from Aspergillus terreus (strain NIH 2624 / FGSC A1156).